A 370-amino-acid chain; its full sequence is Quinolinate synthase (370 aa).

His62 and Ser83 together coordinate iminosuccinate. A [4Fe-4S] cluster-binding site is contributed by Cys128. Iminosuccinate is bound by residues 154 to 156 (YAN) and Ser171. [4Fe-4S] cluster is bound at residue Cys215. Iminosuccinate contacts are provided by residues 241–243 (HPE) and Thr258. Cys312 is a binding site for [4Fe-4S] cluster.

The protein belongs to the quinolinate synthase family. Type 1 subfamily. [4Fe-4S] cluster serves as cofactor.

Its subcellular location is the cytoplasm. The catalysed reaction is iminosuccinate + dihydroxyacetone phosphate = quinolinate + phosphate + 2 H2O + H(+). Its pathway is cofactor biosynthesis; NAD(+) biosynthesis; quinolinate from iminoaspartate: step 1/1. Catalyzes the condensation of iminoaspartate with dihydroxyacetone phosphate to form quinolinate. This chain is Quinolinate synthase, found in Neisseria meningitidis serogroup C (strain 053442).